The sequence spans 376 residues: Phosphoserine aminotransferase (376 aa).

L-glutamate is bound at residue Arg-46. Pyridoxal 5'-phosphate contacts are provided by residues 80 to 81, Phe-104, Thr-150, Asp-172, and Gln-195; that span reads AT. Position 196 is an N6-(pyridoxal phosphate)lysine (Lys-196). 247 to 248 contacts pyridoxal 5'-phosphate; the sequence is NT.

It belongs to the class-V pyridoxal-phosphate-dependent aminotransferase family. SerC subfamily. As to quaternary structure, homodimer. Pyridoxal 5'-phosphate serves as cofactor.

The protein localises to the cytoplasm. The enzyme catalyses O-phospho-L-serine + 2-oxoglutarate = 3-phosphooxypyruvate + L-glutamate. It carries out the reaction 4-(phosphooxy)-L-threonine + 2-oxoglutarate = (R)-3-hydroxy-2-oxo-4-phosphooxybutanoate + L-glutamate. It functions in the pathway amino-acid biosynthesis; L-serine biosynthesis; L-serine from 3-phospho-D-glycerate: step 2/3. It participates in cofactor biosynthesis; pyridoxine 5'-phosphate biosynthesis; pyridoxine 5'-phosphate from D-erythrose 4-phosphate: step 3/5. In terms of biological role, catalyzes the reversible conversion of 3-phosphohydroxypyruvate to phosphoserine and of 3-hydroxy-2-oxo-4-phosphonooxybutanoate to phosphohydroxythreonine. The polypeptide is Phosphoserine aminotransferase (Corynebacterium glutamicum (strain R)).